Consider the following 196-residue polypeptide: Large ribosomal subunit protein mL66 (196 aa).

The N-terminal 34 residues, 1-34 (MAALNVLVSGCGRFLRGLLTGPTVTSWARPPARG), are a transit peptide targeting the mitochondrion.

This sequence belongs to the bacterial ribosomal protein bS18 family. Mitochondrion-specific ribosomal protein mL66 subfamily. As to quaternary structure, component of the mitochondrial ribosome small subunit (28S) which comprises a 12S rRNA and about 30 distinct proteins.

Its subcellular location is the mitochondrion. The polypeptide is Large ribosomal subunit protein mL66 (MRPS18A) (Bos taurus (Bovine)).